Consider the following 195-residue polypeptide: Adenylate kinase (195 aa).

Gly10–Thr15 provides a ligand contact to ATP. Positions Ser30 to Val59 are NMP. Residues Thr31, Arg36, Gly57–Val59, Gly85–Arg88, and Gln92 each bind AMP. The tract at residues Asn126–Asp143 is LID. An ATP-binding site is contributed by Arg127. Position 150 (Arg150) interacts with AMP. Position 178 (Ala178) interacts with ATP.

This sequence belongs to the adenylate kinase family. As to quaternary structure, monomer.

The protein localises to the cytoplasm. The catalysed reaction is AMP + ATP = 2 ADP. It functions in the pathway purine metabolism; AMP biosynthesis via salvage pathway; AMP from ADP: step 1/1. In terms of biological role, catalyzes the reversible transfer of the terminal phosphate group between ATP and AMP. Plays an important role in cellular energy homeostasis and in adenine nucleotide metabolism. In Xanthobacter autotrophicus (strain ATCC BAA-1158 / Py2), this protein is Adenylate kinase.